Here is a 374-residue protein sequence, read N- to C-terminus: Ribosomal RNA large subunit methyltransferase G (374 aa).

It belongs to the methyltransferase superfamily. RlmG family.

It is found in the cytoplasm. The catalysed reaction is guanosine(1835) in 23S rRNA + S-adenosyl-L-methionine = N(2)-methylguanosine(1835) in 23S rRNA + S-adenosyl-L-homocysteine + H(+). Functionally, specifically methylates the guanine in position 1835 (m2G1835) of 23S rRNA. The sequence is that of Ribosomal RNA large subunit methyltransferase G from Photobacterium profundum (strain SS9).